The following is a 601-amino-acid chain: MKMNRIWLLLLTFSSAIHSPVQGESLVCKNALQDLSFLEHLLQVKYAPKTWKEQYLGWDLVQSSVSAQQKLRTQENPSTSFCQQVLADFIGGLNDFHAGVTFFAIESAYLPYTVQKSSDGRFYFVDIMTFSSEIRVGDELLEVDGAPVQDVLATLYGSNHKGTAAEESAALRTLFSRMASLGHKVPSGRTTLKIRRPFGTTREVRVKWRYVPEGVGDLATIAPSIRAPQLQKSMRSFFPKKDDAFHRSSSLFYSPMVPHFWAELRNHYATSGLKSGYNIGSTDGFLPVIGPVIWESEGLFRAYISSVTDGDGKSHKVGFLRIPTYSWQDMEDFDPSGPPPWEEFAKIIQVFSSNTEALIIDQTNNPGGSVLYLYALLSMLTDRPLELPKHRMILTQDEVVDALDWLTLLENVDTNVESRLALGDNMEGYTVDLQVAEYLKSFGRQVLNCWSKGDIELSTPIPLFGFEKIHPHPRVQYSKPICVLINEQDFSCADFFPVVLKDNDRALIVGTRTAGAGGFVFNVQFPNRTGIKTCSLTGSLAVREHGAFIENIGVEPHIDLPFTANDIRYKGYSEYLDKVKKLVCQLINNDGTIILAEDGSF.

It belongs to the chlamydial CPn_1016/CT_858/TC_0248 family.

The sequence is that of Protein CT_858 from Chlamydia trachomatis serovar D (strain ATCC VR-885 / DSM 19411 / UW-3/Cx).